Consider the following 185-residue polypeptide: GTP cyclohydrolase 1 (185 aa).

Zn(2+) is bound by residues Cys-76, His-79, and Cys-147.

This sequence belongs to the GTP cyclohydrolase I family. Toroid-shaped homodecamer, composed of two pentamers of five dimers.

The catalysed reaction is GTP + H2O = 7,8-dihydroneopterin 3'-triphosphate + formate + H(+). It functions in the pathway cofactor biosynthesis; 7,8-dihydroneopterin triphosphate biosynthesis; 7,8-dihydroneopterin triphosphate from GTP: step 1/1. This Clostridium perfringens (strain ATCC 13124 / DSM 756 / JCM 1290 / NCIMB 6125 / NCTC 8237 / Type A) protein is GTP cyclohydrolase 1.